The following is a 414-amino-acid chain: Glutamyl-tRNA reductase (414 aa).

Residues 49-52 (TCNR), Ser-108, 113-115 (EPQ), and Gln-119 each bind substrate. The active-site Nucleophile is Cys-50. 188–193 (GAGQTG) contributes to the NADP(+) binding site.

It belongs to the glutamyl-tRNA reductase family. As to quaternary structure, homodimer.

The catalysed reaction is (S)-4-amino-5-oxopentanoate + tRNA(Glu) + NADP(+) = L-glutamyl-tRNA(Glu) + NADPH + H(+). The protein operates within porphyrin-containing compound metabolism; protoporphyrin-IX biosynthesis; 5-aminolevulinate from L-glutamyl-tRNA(Glu): step 1/2. Its function is as follows. Catalyzes the NADPH-dependent reduction of glutamyl-tRNA(Glu) to glutamate 1-semialdehyde (GSA). In Francisella philomiragia subsp. philomiragia (strain ATCC 25017 / CCUG 19701 / FSC 153 / O#319-036), this protein is Glutamyl-tRNA reductase.